Reading from the N-terminus, the 252-residue chain is 7-cyano-7-deazaguanine synthase (252 aa).

Residue 22-32 (FSGGQDSTTCL) participates in ATP binding. C215, C230, C233, and C236 together coordinate Zn(2+).

It belongs to the QueC family. Requires Zn(2+) as cofactor.

The catalysed reaction is 7-carboxy-7-deazaguanine + NH4(+) + ATP = 7-cyano-7-deazaguanine + ADP + phosphate + H2O + H(+). Its pathway is purine metabolism; 7-cyano-7-deazaguanine biosynthesis. Functionally, catalyzes the ATP-dependent conversion of 7-carboxy-7-deazaguanine (CDG) to 7-cyano-7-deazaguanine (preQ(0)). The protein is 7-cyano-7-deazaguanine synthase of Granulibacter bethesdensis (strain ATCC BAA-1260 / CGDNIH1).